Consider the following 263-residue polypeptide: Sulfur carrier protein FdhD (263 aa).

C107 serves as the catalytic Cysteine persulfide intermediate.

This sequence belongs to the FdhD family.

It is found in the cytoplasm. Its function is as follows. Required for formate dehydrogenase (FDH) activity. Acts as a sulfur carrier protein that transfers sulfur from IscS to the molybdenum cofactor prior to its insertion into FDH. This is Sulfur carrier protein FdhD from Bacillus licheniformis (strain ATCC 14580 / DSM 13 / JCM 2505 / CCUG 7422 / NBRC 12200 / NCIMB 9375 / NCTC 10341 / NRRL NRS-1264 / Gibson 46).